A 765-amino-acid chain; its full sequence is Glycine--tRNA ligase (765 aa).

A mitochondrion-targeting transit peptide spans 1–87 (MSLQLLKALP…LRSAAAEFIM (87 aa)). The segment at 41-73 (TTTKPTPSAPPPPPPTQPQQPAATTSWGTKKQN) is disordered. Residues 47–58 (PSAPPPPPPTQP) show a composition bias toward pro residues. The WHEP-TRS domain maps to 95–151 (QLAPLRERVQEQGNLVRDLKAKGAPEIDVKKAVAELKARKKLLEDKELALTPSVVSF). E331 contributes to the glycine binding site. ATP is bound by residues 363-365 (RNE) and 374-375 (RV). E382 contributes to the glycine binding site. 489–490 (EC) provides a ligand contact to ATP. A glycine-binding site is contributed by 609-611 (EPS). R616 serves as a coordination point for ATP.

It belongs to the class-II aminoacyl-tRNA synthetase family. As to quaternary structure, homodimer.

It is found in the mitochondrion. The protein localises to the cytoplasm. Its subcellular location is the cell projection. It localises to the axon. It catalyses the reaction 2 ATP + H(+) = P(1),P(4)-bis(5'-adenosyl) tetraphosphate + diphosphate. It carries out the reaction tRNA(Gly) + glycine + ATP = glycyl-tRNA(Gly) + AMP + diphosphate. Catalyzes the ATP-dependent ligation of glycine to the 3'-end of its cognate tRNA, via the formation of an aminoacyl-adenylate intermediate (Gly-AMP). Also produces diadenosine tetraphosphate (Ap4A), a universal pleiotropic signaling molecule needed for cell regulation pathways, by direct condensation of 2 ATPs. Thereby, may play a special role in Ap4A homeostasis. Required for terminal arborization of both dendrites and axons during development. The chain is Glycine--tRNA ligase from Drosophila melanogaster (Fruit fly).